Reading from the N-terminus, the 235-residue chain is FsC-acetyl coenzyme A-N(2)-transacetylase (235 aa).

One can recognise an N-acetyltransferase domain in the interval 14 to 190 (LELVPLGHEH…RYSITREEWL (177 aa)). CoA-binding positions include 106–108 (FRV), Gly-114, Asn-146, and 151–153 (AVM).

Its pathway is siderophore biosynthesis. FsC-acetyl coenzyme A-N(2)-transacetylase; part of the siderophore biosynthetic pathway. Aspergillus fumigatus produces 4 types of siderophores, low-molecular-mass iron chelators, including excreted fusarinine C (FsC) and triacetylfusarinine C (TAFC) for iron uptake and intacellular ferricrocin (FC) for hyphal and hydroxyferricrocin (HFC) for conidial iron distribution and storage. TAFC consists of 3 N(2)-acetyl-N(5)-anhydromevalonyl-N(5)-hydroxyornithine residues cyclically linked by ester bonds; FC is a cyclic hexapeptide with the structure Gly-Ser-Gly-(N(5)-acetyl-N(5)-hydroxyornithine)x3. The biosynthesis of all four siderophores depends on the hydroxylation of ornithine, catalyzed by the monooxygenase sidA. Subsequently, the pathways for biosynthesis of extra- and intracellular siderophores split. For biosynthesis of extracellular siderophores, the transacylase sidF transfers anhydromevalonyl to N(5)-hydroxyornithine. The required anhydromevalonyl-CoA moiety is derived from mevalonate by CoA ligation and dehydration catalyzed by sidI and sidH respectively. The acetylation of N(5)-hydroxyornithine for FC biosynthesis involves the constitutively expressed sidL. FC is hydroxylated to HFC by an as yet uncharacterized enzyme during conidiation. Assembly of fusarinine C (FsC) and FC is catalyzed by two different nonribosomal peptide synthetases (NRPS), sidD and sidC respectively. Subsequently, sidG catalyzes N2-acetylation of FsC for forming TAFC. Both extra- and intracellular siderophores are crucial for growth during iron limitation and virulence. In Aspergillus fumigatus (strain ATCC MYA-4609 / CBS 101355 / FGSC A1100 / Af293) (Neosartorya fumigata), this protein is FsC-acetyl coenzyme A-N(2)-transacetylase.